The sequence spans 447 residues: Adenylosuccinate synthetase (447 aa).

GTP contacts are provided by residues 12-18 (GDEGKGK) and 40-42 (GHT). The active-site Proton acceptor is the Asp13. The Mg(2+) site is built by Asp13 and Gly40. IMP is bound by residues 13–16 (DEGK), 38–41 (NAGH), Thr128, Arg142, Gln223, Thr238, and Arg302. The active-site Proton donor is the His41. 298-304 (TTTGRKR) serves as a coordination point for substrate. GTP is bound by residues Arg304, 330-332 (KLD), and 412-414 (SLG).

The protein belongs to the adenylosuccinate synthetase family. As to quaternary structure, homodimer. Mg(2+) serves as cofactor.

The protein resides in the cytoplasm. It carries out the reaction IMP + L-aspartate + GTP = N(6)-(1,2-dicarboxyethyl)-AMP + GDP + phosphate + 2 H(+). It functions in the pathway purine metabolism; AMP biosynthesis via de novo pathway; AMP from IMP: step 1/2. Functionally, plays an important role in the de novo pathway of purine nucleotide biosynthesis. Catalyzes the first committed step in the biosynthesis of AMP from IMP. The sequence is that of Adenylosuccinate synthetase from Nostoc sp. (strain PCC 7120 / SAG 25.82 / UTEX 2576).